The sequence spans 262 residues: Short-chain reductase protein NovJ (262 aa).

Residues G23–R26 and D73–V74 each bind NADP(+). Position 152 (S152) interacts with substrate. Y164 functions as the Proton acceptor in the catalytic mechanism. Residue Y164 to K168 coordinates NADP(+).

This sequence belongs to the short-chain dehydrogenases/reductases (SDR) family. Heterotetramer; the NovJ(2)K(2) heterotetramer is composed of subunits of 2 NovJ and 2 subunits of NovK.

The protein operates within antibiotic biosynthesis; novobiocin biosynthesis. In terms of biological role, catalytic subunit of the NovJ(2)K(2) heterotetramer that catalyzes the NADPH-dependent reduction of the tyrosyl moiety of L-beta-OH-Tyr-S-NovH intermediate to yield the tethered beta-ketotyrosyl-S-NovH in the novobiocin biosynthesis pathway. Novobiocin is an aminocoumarin family antibiotic that targets bacterial DNA gyrases. In Streptomyces niveus (Streptomyces spheroides), this protein is Short-chain reductase protein NovJ (novJ).